The primary structure comprises 188 residues: Protein GrpE (188 aa).

Belongs to the GrpE family. In terms of assembly, homodimer.

It localises to the cytoplasm. In terms of biological role, participates actively in the response to hyperosmotic and heat shock by preventing the aggregation of stress-denatured proteins, in association with DnaK and GrpE. It is the nucleotide exchange factor for DnaK and may function as a thermosensor. Unfolded proteins bind initially to DnaJ; upon interaction with the DnaJ-bound protein, DnaK hydrolyzes its bound ATP, resulting in the formation of a stable complex. GrpE releases ADP from DnaK; ATP binding to DnaK triggers the release of the substrate protein, thus completing the reaction cycle. Several rounds of ATP-dependent interactions between DnaJ, DnaK and GrpE are required for fully efficient folding. The polypeptide is Protein GrpE (Chromobacterium violaceum (strain ATCC 12472 / DSM 30191 / JCM 1249 / CCUG 213 / NBRC 12614 / NCIMB 9131 / NCTC 9757 / MK)).